A 661-amino-acid polypeptide reads, in one-letter code: DNA-directed RNA polymerase subunit beta' (661 aa).

Zn(2+)-binding residues include cysteine 69, cysteine 71, cysteine 87, and cysteine 90. Mg(2+)-binding residues include aspartate 489, aspartate 491, and aspartate 493.

It belongs to the RNA polymerase beta' chain family. RpoC1 subfamily. In terms of assembly, in plastids the minimal PEP RNA polymerase catalytic core is composed of four subunits: alpha, beta, beta', and beta''. When a (nuclear-encoded) sigma factor is associated with the core the holoenzyme is formed, which can initiate transcription. Mg(2+) serves as cofactor. It depends on Zn(2+) as a cofactor.

It localises to the plastid. The protein resides in the chloroplast. The enzyme catalyses RNA(n) + a ribonucleoside 5'-triphosphate = RNA(n+1) + diphosphate. Functionally, DNA-dependent RNA polymerase catalyzes the transcription of DNA into RNA using the four ribonucleoside triphosphates as substrates. This is DNA-directed RNA polymerase subunit beta' from Chaetosphaeridium globosum (Charophycean green alga).